The sequence spans 732 residues: Acylamino-acid-releasing enzyme (732 aa).

The residue at position 1 (M1) is an N-acetylmethionine. S185 and S187 each carry phosphoserine. Residues S587, D675, and H707 each act as charge relay system in the active site.

The protein belongs to the peptidase S9C family. Homotetramer.

The protein resides in the cytoplasm. The enzyme catalyses Cleavage of an N-acetyl or N-formyl amino acid from the N-terminus of a polypeptide.. With respect to regulation, homotetramerization is required for activity. Tetramerization results in the formation of a gated channel which is involved in substrate selection and substrate access to the catalytic sites. Functionally, this enzyme catalyzes the hydrolysis of the N-terminal peptide bond of an N-acetylated peptide to generate an N-acetylated amino acid and a peptide with a free N-terminus. It preferentially cleaves off Ac-Ala, Ac-Met and Ac-Ser. Also, involved in the degradation of oxidized and glycated proteins. The protein is Acylamino-acid-releasing enzyme (Apeh) of Mus musculus (Mouse).